Consider the following 340-residue polypeptide: MQELIEKIRQETANFEITDKDSAEAFRLKFLVRKGSIPQLFEQMKTVSKEDKPAVGKLLNELKLFADGKFKEAMEHIAANELAADDLADLTLPGRTHFLGAEHPVQKVLGDMKRIFQKMGFSTATGPEIERDAYNFTLLNFAPDHPARDMQDTFFIKKEADAEDVVLRTHTSPVQIRVMLEQAPPIRVICPGKVFRNEAVSARSYCVFHQLEGLYVDKGVTFADLKSTIYSFARQMFGSDVKMKFRPSYFPFTEPSAEVDITCYLCGGKGCRVCKHTGWLEILGCGMVHPNVLRNCGIDPEIYSGYAFGMGIERTALLRYNIDDIRLFFENDLRMLSQFE.

Mg(2+) is bound at residue E254.

Belongs to the class-II aminoacyl-tRNA synthetase family. Phe-tRNA synthetase alpha subunit type 1 subfamily. As to quaternary structure, tetramer of two alpha and two beta subunits. Requires Mg(2+) as cofactor.

It is found in the cytoplasm. It catalyses the reaction tRNA(Phe) + L-phenylalanine + ATP = L-phenylalanyl-tRNA(Phe) + AMP + diphosphate + H(+). The sequence is that of Phenylalanine--tRNA ligase alpha subunit from Chloroherpeton thalassium (strain ATCC 35110 / GB-78).